A 280-amino-acid chain; its full sequence is Equatorin (280 aa).

The N-terminal stretch at 1-19 (MDFILLIFLSGVFLPNIFS) is a signal peptide. The Vesicular segment spans residues 20-183 (LQPTVEQDPG…LSELEEIKLK (164 aa)). Residues 112 to 131 (ATASGEEDKRSEPSRKSSTP) form a disordered region. Over residues 117 to 126 (EEDKRSEPSR) the composition is skewed to basic and acidic residues. Asn-145 is a glycosylation site (N-linked (GlcNAc...) asparagine). Residues 184–204 (LMLGISLMTLILLIPLLIFCF) traverse the membrane as a helical segment. Residues 205–280 (ATLYKLRHLR…AEVTEERISE (76 aa)) lie on the Cytoplasmic side of the membrane. Ser-279 carries the phosphoserine modification.

As to quaternary structure, interacts with SNAP25. In terms of processing, highly N- and O-glycosylated; contains sialic acid. As to expression, highly expressed in testis and epididymis. Low expression in other tissues.

It is found in the cytoplasmic vesicle. The protein resides in the secretory vesicle. Its subcellular location is the acrosome membrane. The protein localises to the acrosome inner membrane. It localises to the acrosome outer membrane. In terms of biological role, acrosomal membrane-anchored protein involved in the process of fertilization and in acrosome biogenesis. The protein is Equatorin (Eqtn) of Rattus norvegicus (Rat).